The chain runs to 122 residues: Protein FAM223B (122 aa).

The protein belongs to the FAM223 family.

This Homo sapiens (Human) protein is Protein FAM223B (FAM223B).